We begin with the raw amino-acid sequence, 287 residues long: 4-hydroxybenzoate octaprenyltransferase (287 aa).

A run of 8 helical transmembrane segments spans residues 23–43 (IGSL…GGTA), 46–66 (GKLL…GCVI), 99–119 (LFVL…AMTI), 141–161 (LPQV…YAAV), 162–182 (GESL…WTVA), 213–233 (LVIG…GDLN), 237–257 (GAYY…QQLI), and 266–286 (FRAF…ILLA).

It belongs to the UbiA prenyltransferase family. Mg(2+) is required as a cofactor.

It localises to the cell inner membrane. The catalysed reaction is all-trans-octaprenyl diphosphate + 4-hydroxybenzoate = 4-hydroxy-3-(all-trans-octaprenyl)benzoate + diphosphate. Its pathway is cofactor biosynthesis; ubiquinone biosynthesis. In terms of biological role, catalyzes the prenylation of para-hydroxybenzoate (PHB) with an all-trans polyprenyl group. Mediates the second step in the final reaction sequence of ubiquinone-8 (UQ-8) biosynthesis, which is the condensation of the polyisoprenoid side chain with PHB, generating the first membrane-bound Q intermediate 3-octaprenyl-4-hydroxybenzoate. The sequence is that of 4-hydroxybenzoate octaprenyltransferase from Edwardsiella ictaluri (strain 93-146).